The sequence spans 292 residues: uncharacterized protein (292 aa).

The helical transmembrane segment at 66–86 threads the bilayer; sequence LFFYLLFWWTYLTIVVLLTVP.

The protein localises to the host membrane. This is an uncharacterized protein from Alcelaphine herpesvirus 1 (strain C500) (AlHV-1).